The primary structure comprises 514 residues: Maturase K (514 aa).

It belongs to the intron maturase 2 family. MatK subfamily.

The protein localises to the plastid. It localises to the chloroplast. Usually encoded in the trnK tRNA gene intron. Probably assists in splicing its own and other chloroplast group II introns. The chain is Maturase K from Encephalartos altensteinii (Altenstein's bread tree).